A 455-amino-acid chain; its full sequence is Bifunctional protein GlmU (455 aa).

A pyrophosphorylase region spans residues 1-232 (MASITGALIL…DPNLLGVNDP (232 aa)). UDP-N-acetyl-alpha-D-glucosamine is bound by residues 10–13 (LAAG), Lys24, Gln75, and 80–81 (GT). Asp106 lines the Mg(2+) pocket. Residues Gly141, Glu155, Asn172, and Asn230 each coordinate UDP-N-acetyl-alpha-D-glucosamine. Residue Asn230 coordinates Mg(2+). The linker stretch occupies residues 233–253 (AELIRSEALVRARIALNWIEK). The interval 254-455 (RVLIHAPETV…QTTLPRRRNS (202 aa)) is N-acetyltransferase. Arg336 and Lys354 together coordinate UDP-N-acetyl-alpha-D-glucosamine. His366 serves as the catalytic Proton acceptor. UDP-N-acetyl-alpha-D-glucosamine-binding residues include Tyr369 and Asn380. Acetyl-CoA-binding positions include Ala383, 389 to 390 (NY), Ser408, Ala426, and Arg443.

This sequence in the N-terminal section; belongs to the N-acetylglucosamine-1-phosphate uridyltransferase family. It in the C-terminal section; belongs to the transferase hexapeptide repeat family. In terms of assembly, homotrimer. Mg(2+) is required as a cofactor.

The protein localises to the cytoplasm. It carries out the reaction alpha-D-glucosamine 1-phosphate + acetyl-CoA = N-acetyl-alpha-D-glucosamine 1-phosphate + CoA + H(+). The catalysed reaction is N-acetyl-alpha-D-glucosamine 1-phosphate + UTP + H(+) = UDP-N-acetyl-alpha-D-glucosamine + diphosphate. Its pathway is nucleotide-sugar biosynthesis; UDP-N-acetyl-alpha-D-glucosamine biosynthesis; N-acetyl-alpha-D-glucosamine 1-phosphate from alpha-D-glucosamine 6-phosphate (route II): step 2/2. It functions in the pathway nucleotide-sugar biosynthesis; UDP-N-acetyl-alpha-D-glucosamine biosynthesis; UDP-N-acetyl-alpha-D-glucosamine from N-acetyl-alpha-D-glucosamine 1-phosphate: step 1/1. It participates in bacterial outer membrane biogenesis; LPS lipid A biosynthesis. Its function is as follows. Catalyzes the last two sequential reactions in the de novo biosynthetic pathway for UDP-N-acetylglucosamine (UDP-GlcNAc). The C-terminal domain catalyzes the transfer of acetyl group from acetyl coenzyme A to glucosamine-1-phosphate (GlcN-1-P) to produce N-acetylglucosamine-1-phosphate (GlcNAc-1-P), which is converted into UDP-GlcNAc by the transfer of uridine 5-monophosphate (from uridine 5-triphosphate), a reaction catalyzed by the N-terminal domain. The sequence is that of Bifunctional protein GlmU from Nitratidesulfovibrio vulgaris (strain DSM 19637 / Miyazaki F) (Desulfovibrio vulgaris).